Here is a 141-residue protein sequence, read N- to C-terminus: Putative pre-16S rRNA nuclease (141 aa).

Belongs to the YqgF nuclease family.

Its subcellular location is the cytoplasm. Functionally, could be a nuclease involved in processing of the 5'-end of pre-16S rRNA. The sequence is that of Putative pre-16S rRNA nuclease from Shewanella denitrificans (strain OS217 / ATCC BAA-1090 / DSM 15013).